The chain runs to 387 residues: Phosphoglycerate kinase (387 aa).

Residues 21–23, arginine 36, 59–62, arginine 113, and arginine 146 contribute to the substrate site; these read DLN and HLGR. Residues lysine 197, glutamate 314, and 340–343 each bind ATP; that span reads GGDT.

The protein belongs to the phosphoglycerate kinase family. Monomer.

The protein resides in the cytoplasm. It catalyses the reaction (2R)-3-phosphoglycerate + ATP = (2R)-3-phospho-glyceroyl phosphate + ADP. Its pathway is carbohydrate degradation; glycolysis; pyruvate from D-glyceraldehyde 3-phosphate: step 2/5. The polypeptide is Phosphoglycerate kinase (Pseudomonas paraeruginosa (strain DSM 24068 / PA7) (Pseudomonas aeruginosa (strain PA7))).